The primary structure comprises 307 residues: MTRHARNCTAGAVYTYNEKKRDAAESGYGTNAQRLGKDSVKSFDCCSLTLQPCRRPVITKDGYLFDKEAILQYIVTKKNEYSRRLKEYERLRRAEEDKLSQEANSKQQARMERFVNAEKPAMTPAHSSAAASEKPSTSSAAAAASSESSSASSISNMTNGHEKKLPSFWLPSECPNAGLAKAQKPDATIYCPVSQKPLRVKDLIDVKFTLLKDGDTKRSLIAKEARYMCPITHDVLSNAVPCAVLRPTGDVVTMECVERLIRKDMIHPLTDRKLKEKDIIPLQRGGTGYATTNDHLQAKEKRPMLQA.

The disordered stretch occupies residues 120-159 (PAMTPAHSSAAASEKPSTSSAAAAASSESSSASSISNMTN). The segment covering 127–155 (SSAAASEKPSTSSAAAAASSESSSASSIS) has biased composition (low complexity).

Belongs to the NOSIP family.

It localises to the cytoplasm. The protein resides in the nucleus. In terms of biological role, negatively regulates nitric oxide production by inducing nitric oxide synthase translocation to actin cytoskeleton and inhibiting its enzymatic activity. This chain is Nitric oxide synthase-interacting protein homolog, found in Drosophila melanogaster (Fruit fly).